Consider the following 341-residue polypeptide: Eukaryotic translation initiation factor 3 subunit I (341 aa).

5 WD repeats span residues 8–49, 50–91, 145–184, 189–228, and 286–325; these read GHER…GTYH, GHQG…HTWE, CDES…QLHS, DMGS…VLKT, and GHFG…FDFM.

The protein belongs to the eIF-3 subunit I family. As to quaternary structure, component of the eukaryotic translation initiation factor 3 (eIF-3) complex.

The protein localises to the cytoplasm. Functionally, component of the eukaryotic translation initiation factor 3 (eIF-3) complex, which is involved in protein synthesis of a specialized repertoire of mRNAs and, together with other initiation factors, stimulates binding of mRNA and methionyl-tRNAi to the 40S ribosome. The eIF-3 complex specifically targets and initiates translation of a subset of mRNAs involved in cell proliferation. The sequence is that of Eukaryotic translation initiation factor 3 subunit I from Pyricularia oryzae (strain 70-15 / ATCC MYA-4617 / FGSC 8958) (Rice blast fungus).